The sequence spans 160 residues: Troponin C, skeletal muscle (160 aa).

4 consecutive EF-hand domains span residues 15–50, 51–86, 91–126, and 127–160; these read EMIA…LGQN, PTRE…QLKE, KSEE…SGEP, and VSEE…ENIQ. Residues aspartate 28, aspartate 30, aspartate 34, glutamate 39, aspartate 64, aspartate 66, serine 68, threonine 70, glutamate 75, aspartate 104, asparagine 106, aspartate 108, glutamate 115, aspartate 140, asparagine 142, aspartate 144, lysine 146, and glutamate 151 each contribute to the Ca(2+) site.

The protein belongs to the troponin C family.

Troponin is the central regulatory protein of striated muscle contraction. Tn consists of three components: Tn-I which is the inhibitor of actomyosin ATPase, Tn-T which contains the binding EF-hand for tropomyosin and Tn-C. The binding of calcium to Tn-C abolishes the inhibitory action of Tn on actin filaments. In Anguilla anguilla (European freshwater eel), this protein is Troponin C, skeletal muscle.